A 447-amino-acid chain; its full sequence is Argininosuccinate synthase (447 aa).

Residues 17–25 (AFSGGLDTS) and Ala43 each bind ATP. Residue Tyr99 coordinates L-citrulline. Residues Gly129 and Thr131 each contribute to the ATP site. Residues Thr131, Asn135, and Asp136 each contribute to the L-aspartate site. Asn135 lines the L-citrulline pocket. Position 136 (Asp136) interacts with ATP. Residues Arg139 and Ser192 each contribute to the L-citrulline site. Asp194 is an ATP binding site. L-citrulline is bound by residues Thr201, Glu203, and Glu280.

It belongs to the argininosuccinate synthase family. Type 2 subfamily. In terms of assembly, homotetramer.

Its subcellular location is the cytoplasm. The catalysed reaction is L-citrulline + L-aspartate + ATP = 2-(N(omega)-L-arginino)succinate + AMP + diphosphate + H(+). Its pathway is amino-acid biosynthesis; L-arginine biosynthesis; L-arginine from L-ornithine and carbamoyl phosphate: step 2/3. The protein is Argininosuccinate synthase of Escherichia coli O9:H4 (strain HS).